Consider the following 418-residue polypeptide: Serine hydroxymethyltransferase (418 aa).

(6S)-5,6,7,8-tetrahydrofolate contacts are provided by residues L121 and 125 to 127 (GHL). K230 carries the post-translational modification N6-(pyridoxal phosphate)lysine. 355 to 357 (SPF) is a (6S)-5,6,7,8-tetrahydrofolate binding site.

It belongs to the SHMT family. Homodimer. Pyridoxal 5'-phosphate is required as a cofactor.

It localises to the cytoplasm. It carries out the reaction (6R)-5,10-methylene-5,6,7,8-tetrahydrofolate + glycine + H2O = (6S)-5,6,7,8-tetrahydrofolate + L-serine. Its pathway is one-carbon metabolism; tetrahydrofolate interconversion. It participates in amino-acid biosynthesis; glycine biosynthesis; glycine from L-serine: step 1/1. Functionally, catalyzes the reversible interconversion of serine and glycine with tetrahydrofolate (THF) serving as the one-carbon carrier. This reaction serves as the major source of one-carbon groups required for the biosynthesis of purines, thymidylate, methionine, and other important biomolecules. Also exhibits THF-independent aldolase activity toward beta-hydroxyamino acids, producing glycine and aldehydes, via a retro-aldol mechanism. The polypeptide is Serine hydroxymethyltransferase (Streptococcus pneumoniae (strain P1031)).